Here is a 237-residue protein sequence, read N- to C-terminus: tRNA1(Val) (adenine(37)-N6)-methyltransferase (237 aa).

It belongs to the methyltransferase superfamily. tRNA (adenine-N(6)-)-methyltransferase family.

It localises to the cytoplasm. The enzyme catalyses adenosine(37) in tRNA1(Val) + S-adenosyl-L-methionine = N(6)-methyladenosine(37) in tRNA1(Val) + S-adenosyl-L-homocysteine + H(+). Its function is as follows. Specifically methylates the adenine in position 37 of tRNA(1)(Val) (anticodon cmo5UAC). This is tRNA1(Val) (adenine(37)-N6)-methyltransferase from Tolumonas auensis (strain DSM 9187 / NBRC 110442 / TA 4).